A 560-amino-acid chain; its full sequence is Protein AATF (560 aa).

N-acetylalanine is present on A2. Phosphoserine is present on residues S61 and S63. Residues 76–208 form a disordered region; the sequence is TSRKAWNEDH…GDRNSEDDGV (133 aa). The segment covering 94 to 129 has biased composition (acidic residues); sequence SDEEISDEEGSGDEDSEGLGLEEYDEDDLGAAEEQE. Residues S150 and S155 each carry the phosphoserine modification. Positions 156-165 are enriched in basic and acidic residues; it reads DFEKFTKGMD. Residues 168–195 show a composition bias toward acidic residues; it reads GSSEEEEDEESGMEEGDDAEDSQGESEE. S203, S273, S316, S320, and S321 each carry phosphoserine. The tract at residues 273–315 is POLR2J binding; it reads SALKNSHKALKALLRSLVGLQEELLFQYPDTRYLVDGTKPNAG. Residues 309–333 are disordered; sequence GTKPNAGSEEISSEDDELVEEKKQQ. The tract at residues 316 to 372 is RB1 binding; sequence SEEISSEDDELVEEKKQQRRRVPAKRKLEMEDYPSFMAKRFADFTVYRNRTLQKWHD. The tract at residues 373 to 472 is RB1 and SP1 binding; sequence KTKLASGKLG…FYHQLLRELI (100 aa).

This sequence belongs to the AATF family. As to quaternary structure, part of the small subunit (SSU) processome, composed of more than 70 proteins and the RNA chaperone small nucleolar RNA (snoRNA) U3. Interacts with POLR2J, RB1/RB, RBL1/P107 and RBL2/P130. Interacts with PAWR and SP1. May also bind MAPT. Hyperphosphorylated during the G1/S phase transition. As to expression, ubiquitously expressed. Expressed at high levels in brain, heart, kidney, placenta and thymus.

It is found in the nucleus. It localises to the nucleolus. Functionally, part of the small subunit (SSU) processome, first precursor of the small eukaryotic ribosomal subunit. During the assembly of the SSU processome in the nucleolus, many ribosome biogenesis factors, an RNA chaperone and ribosomal proteins associate with the nascent pre-rRNA and work in concert to generate RNA folding, modifications, rearrangements and cleavage as well as targeted degradation of pre-ribosomal RNA by the RNA exosome. May function as a general inhibitor of the histone deacetylase HDAC1. Binding to the pocket region of RB1 may displace HDAC1 from RB1/E2F complexes, leading to activation of E2F target genes and cell cycle progression. Conversely, displacement of HDAC1 from SP1 bound to the CDKN1A promoter leads to increased expression of this CDK inhibitor and blocks cell cycle progression. Also antagonizes PAWR mediated induction of aberrant amyloid peptide production in Alzheimer disease (presenile and senile dementia), although the molecular basis for this phenomenon has not been described to date. The protein is Protein AATF of Homo sapiens (Human).